Consider the following 326-residue polypeptide: MRALAVVAMVATAFLAAAVHAEQCGSQAGGAVCPNCLCCSQFGWCGSTSDYCGAGCQSQCSAAGCGGGGPTPPSGSGGSGVASIVSRSLFDQMLLHRNDAACPASNFYTYDAFVAAASAFPGFAAAGGDADTNKREVAAFLAQTSHETTGGWATAPDGPYAWGYCFKEENGGAAGPDYCQQSAQWPCAAGKKYYGRGPIQLSYNFNYGPAGQAIGADLLGDPDLVASDATVSFDTAFWFWMTPQSPKPSCHAVATGQWTPSADDQAAGRVPGYGVITNIINGGLECGHGEDDRVADRIGFYKRYCDILGVSYDANLDCYSQRPFGS.

Positions 1–21 (MRALAVVAMVATAFLAAAVHA) are cleaved as a signal peptide. The 41-residue stretch at 22 to 62 (EQCGSQAGGAVCPNCLCCSQFGWCGSTSDYCGAGCQSQCSA) folds into the Chitin-binding type-1 domain. Disulfide bonds link C24–C39, C33–C45, C36–C65, C38–C52, C56–C60, C102–C165, C179–C187, and C286–C318. E147 (proton donor) is an active-site residue.

This sequence belongs to the glycosyl hydrolase 19 family. Chitinase class I subfamily. As to expression, expressed in meristems and at lower levels in roots and sheaths.

It catalyses the reaction Random endo-hydrolysis of N-acetyl-beta-D-glucosaminide (1-&gt;4)-beta-linkages in chitin and chitodextrins.. Hydrolyzes chitin and plays a role in defense against fungal pathogens containing chitin. Its overexpression confers enhanced resistance to sheath blight pathogen (R.solani). In Oryza sativa subsp. japonica (Rice), this protein is Chitinase 12 (Cht12).